The following is a 309-amino-acid chain: Taste receptor type 2 member 31 (309 aa).

The Extracellular segment spans residues 1–2 (MT). A helical transmembrane segment spans residues 3-23 (TFIPIIFSSLVMVMFVTGNFA). The Cytoplasmic portion of the chain corresponds to 24 to 55 (NGFIALVNSIESVKRQKISYADQILTALAVSR). Residues 56–76 (IGLLWVLLLNWYSTVLNPAFY) traverse the membrane as a helical segment. Topologically, residues 77–100 (SVEVRTTAYNVWAVTGHFSNWLAT) are extracellular. A helical transmembrane segment spans residues 101–121 (SLSIFYLLKIANFSNLIFLHL). Residues 122–126 (KRRVK) lie on the Cytoplasmic side of the membrane. Residues 127 to 147 (SVILVMLLGPLLFLACQLFVI) form a helical membrane-spanning segment. The Extracellular portion of the chain corresponds to 148-181 (NMKEIVQTKEYEGNXTWKIKLRSAVYLSDATVTT). Asn-161 is a glycosylation site (N-linked (GlcNAc...) asparagine). A helical membrane pass occupies residues 182-202 (LGNLVPFTLTLLCFLLLICSL). The Cytoplasmic portion of the chain corresponds to 203–229 (CKHLKKMQLHGKGSQDPSMKVHIKALQ). A helical transmembrane segment spans residues 230–250 (TVTSFLLLCAIYFLSIMISVW). Residues 251 to 259 (SLGSLKNKP) are Extracellular-facing. A helical transmembrane segment spans residues 260 to 280 (VFMFCKAMRFSYPSIHPFILI). Residues 281–309 (WGNKKLKQTFLSVLQQVRYWVKGEKPSSP) lie on the Cytoplasmic side of the membrane.

It belongs to the G-protein coupled receptor T2R family.

It localises to the membrane. Functionally, receptor that may play a role in the perception of bitterness and is gustducin-linked. May play a role in sensing the chemical composition of the gastrointestinal content. The activity of this receptor may stimulate alpha gustducin, mediate PLC-beta-2 activation and lead to the gating of TRPM5. In Gorilla gorilla gorilla (Western lowland gorilla), this protein is Taste receptor type 2 member 31 (TAS2R31).